A 76-amino-acid chain; its full sequence is UPF0729 protein C18orf32 (76 aa).

The interval 1–37 is necessary for its localzation to the endoplasmic reticulum and lipid droplets; the sequence is MVCIPCIVIPVLLWIYKKFLEPYIYPLVSPFVSRIWP. The tract at residues 46-76 is disordered; that stretch reads DTNKGKVNFKGADMNGLPTKGPTEICDKKKD.

The protein belongs to the UPF0729 family. In terms of assembly, interacts with DERL1 and AMFR. In terms of processing, undergoes ER-associated degradation (ERAD).

It localises to the endoplasmic reticulum. It is found in the lipid droplet. Functionally, may activate the NF-kappa-B signaling pathway. This is UPF0729 protein C18orf32 (C18orf32) from Homo sapiens (Human).